The following is a 459-amino-acid chain: tRNA modification GTPase MnmE (459 aa).

(6S)-5-formyl-5,6,7,8-tetrahydrofolate is bound by residues Arg30, Glu93, and Lys132. The 156-residue stretch at 226–381 (GVTMAIVGKP…LEEKILESVK (156 aa)) folds into the TrmE-type G domain. Asn236 provides a ligand contact to K(+). GTP-binding positions include 236–241 (NVGKST), 255–261 (TDIPGTT), and 280–283 (DTAG). Position 240 (Ser240) interacts with Mg(2+). Thr255, Ile257, and Thr260 together coordinate K(+). Thr261 is a Mg(2+) binding site. Residue Lys459 participates in (6S)-5-formyl-5,6,7,8-tetrahydrofolate binding.

Belongs to the TRAFAC class TrmE-Era-EngA-EngB-Septin-like GTPase superfamily. TrmE GTPase family. As to quaternary structure, homodimer. Heterotetramer of two MnmE and two MnmG subunits. The cofactor is K(+).

The protein resides in the cytoplasm. In terms of biological role, exhibits a very high intrinsic GTPase hydrolysis rate. Involved in the addition of a carboxymethylaminomethyl (cmnm) group at the wobble position (U34) of certain tRNAs, forming tRNA-cmnm(5)s(2)U34. This is tRNA modification GTPase MnmE from Fervidobacterium nodosum (strain ATCC 35602 / DSM 5306 / Rt17-B1).